Here is a 361-residue protein sequence, read N- to C-terminus: Mannonate dehydratase 1 (361 aa).

Belongs to the mannonate dehydratase family. The cofactor is Fe(2+). Requires Mn(2+) as cofactor.

The catalysed reaction is D-mannonate = 2-dehydro-3-deoxy-D-gluconate + H2O. Its pathway is carbohydrate metabolism; pentose and glucuronate interconversion. In terms of biological role, catalyzes the dehydration of D-mannonate. The chain is Mannonate dehydratase 1 (uxuA1) from Halalkalibacterium halodurans (strain ATCC BAA-125 / DSM 18197 / FERM 7344 / JCM 9153 / C-125) (Bacillus halodurans).